The sequence spans 360 residues: Flavin-dependent trigonelline monooxygenase, oxygenase component (360 aa).

This sequence belongs to the bacterial luciferase oxidoreductase family. Homodimer. The trigonelline monooxygenase is composed of a reductase component TgnA and an oxygenase component TgnB.

The catalysed reaction is N-methylnicotinate + FMNH2 + O2 = (Z)-2-((N-methylformamido)methylene)-5-hydroxybutanolactone + FMN + H(+). It carries out the reaction N-methylnicotinate + FADH2 + O2 = (Z)-2-((N-methylformamido)methylene)-5-hydroxybutanolactone + FAD + H(+). In terms of biological role, involved in the degradation of the pyridine ring of trigonelline (TG; N-methylnicotinate) into succinate and methylamine as carbon and nitrogen sources, respectively. Catalyzes the insertion of two oxygens, followed by a ring cleavage of trigonelline to yield (Z)-2-((N-methylformamido)methylene)-5-hydroxybutyrolactone (MFMB). It is able to use reduced FMN or FAD. The sequence is that of Flavin-dependent trigonelline monooxygenase, oxygenase component from Acinetobacter baylyi (strain ATCC 33305 / BD413 / ADP1).